A 559-amino-acid chain; its full sequence is Tectonic-like complex member MKS1 (559 aa).

The region spanning 311–439 is the C2 B9-type domain; sequence LRLFVNGEVV…TVSTWRPVEL (129 aa).

Part of the tectonic-like complex (also named B9 complex). Interacts with TMEM107. Interacts with TCTN3, AHI1, TCTN1, TCTN2, CC2D2A. Interacts with FLNA. Interacts with TMEM67. Interacts with B9D1 and B9D2.

The protein localises to the cytoplasm. The protein resides in the cytoskeleton. Its subcellular location is the cilium basal body. It localises to the microtubule organizing center. It is found in the centrosome. In terms of biological role, component of the tectonic-like complex, a complex localized at the transition zone of primary cilia and acting as a barrier that prevents diffusion of transmembrane proteins between the cilia and plasma membranes. Involved in centrosome migration to the apical cell surface during early ciliogenesis. Required for ciliary structure and function, including a role in regulating length and appropriate number through modulating centrosome duplication. Required for cell branching morphology. This Homo sapiens (Human) protein is Tectonic-like complex member MKS1 (MKS1).